The primary structure comprises 441 residues: tRNA modification GTPase MnmE (441 aa).

3 residues coordinate (6S)-5-formyl-5,6,7,8-tetrahydrofolate: Arg-24, Glu-81, and Lys-121. The 149-residue stretch at 218–366 (GMVVAIAGPP…LLRELTRFAA (149 aa)) folds into the TrmE-type G domain. GTP is bound by residues 228–233 (NVGKST), 247–253 (SPHAGTT), and 272–275 (DTAG). Mg(2+) is bound by residues Ser-232 and Thr-253. Position 441 (Lys-441) interacts with (6S)-5-formyl-5,6,7,8-tetrahydrofolate.

Belongs to the TRAFAC class TrmE-Era-EngA-EngB-Septin-like GTPase superfamily. TrmE GTPase family. In terms of assembly, homodimer. Heterotetramer of two MnmE and two MnmG subunits. The cofactor is K(+).

It localises to the cytoplasm. Functionally, exhibits a very high intrinsic GTPase hydrolysis rate. Involved in the addition of a carboxymethylaminomethyl (cmnm) group at the wobble position (U34) of certain tRNAs, forming tRNA-cmnm(5)s(2)U34. In Rhodopseudomonas palustris (strain ATCC BAA-98 / CGA009), this protein is tRNA modification GTPase MnmE.